The primary structure comprises 216 residues: Thiamine-phosphate synthase (216 aa).

4-amino-2-methyl-5-(diphosphooxymethyl)pyrimidine is bound by residues 40–44 (QLRIK) and asparagine 72. Positions 73 and 92 each coordinate Mg(2+). Serine 111 contacts 4-amino-2-methyl-5-(diphosphooxymethyl)pyrimidine. 137-139 (TTT) is a binding site for 2-[(2R,5Z)-2-carboxy-4-methylthiazol-5(2H)-ylidene]ethyl phosphate. Lysine 140 is a 4-amino-2-methyl-5-(diphosphooxymethyl)pyrimidine binding site. 2-[(2R,5Z)-2-carboxy-4-methylthiazol-5(2H)-ylidene]ethyl phosphate contacts are provided by residues glycine 169 and 189–190 (VS).

Belongs to the thiamine-phosphate synthase family. It depends on Mg(2+) as a cofactor.

The enzyme catalyses 2-[(2R,5Z)-2-carboxy-4-methylthiazol-5(2H)-ylidene]ethyl phosphate + 4-amino-2-methyl-5-(diphosphooxymethyl)pyrimidine + 2 H(+) = thiamine phosphate + CO2 + diphosphate. It carries out the reaction 2-(2-carboxy-4-methylthiazol-5-yl)ethyl phosphate + 4-amino-2-methyl-5-(diphosphooxymethyl)pyrimidine + 2 H(+) = thiamine phosphate + CO2 + diphosphate. The catalysed reaction is 4-methyl-5-(2-phosphooxyethyl)-thiazole + 4-amino-2-methyl-5-(diphosphooxymethyl)pyrimidine + H(+) = thiamine phosphate + diphosphate. Its pathway is cofactor biosynthesis; thiamine diphosphate biosynthesis; thiamine phosphate from 4-amino-2-methyl-5-diphosphomethylpyrimidine and 4-methyl-5-(2-phosphoethyl)-thiazole: step 1/1. Its function is as follows. Condenses 4-methyl-5-(beta-hydroxyethyl)thiazole monophosphate (THZ-P) and 2-methyl-4-amino-5-hydroxymethyl pyrimidine pyrophosphate (HMP-PP) to form thiamine monophosphate (TMP). In Photorhabdus laumondii subsp. laumondii (strain DSM 15139 / CIP 105565 / TT01) (Photorhabdus luminescens subsp. laumondii), this protein is Thiamine-phosphate synthase.